Reading from the N-terminus, the 134-residue chain is Methylglyoxal synthase (134 aa).

In terms of domain architecture, MGS-like spans 1–134; the sequence is MHIALIAHDE…DWRDLRRNDE (134 aa). Substrate is bound by residues H8, K12, 34–37, and 54–55; these read TGTT and SG. D60 functions as the Proton donor/acceptor in the catalytic mechanism. A substrate-binding site is contributed by H87.

It belongs to the methylglyoxal synthase family.

It carries out the reaction dihydroxyacetone phosphate = methylglyoxal + phosphate. In terms of biological role, catalyzes the formation of methylglyoxal from dihydroxyacetone phosphate. The polypeptide is Methylglyoxal synthase (Listeria monocytogenes serotype 4b (strain CLIP80459)).